The primary structure comprises 248 residues: Transmembrane protein 182 (248 aa).

Residues 1–26 (MKIHVAGFFAGLFGALATLFILLSFG) form the signal peptide. Over 27–136 (TDYWLLASET…IIYRGFWSVS (110 aa)) the chain is Extracellular. N-linked (GlcNAc...) asparagine glycans are attached at residues asparagine 66 and asparagine 119. Residues 137–157 (MLVGVAAVVAGGFIIICAAPF) form a helical membrane-spanning segment. Topologically, residues 158–167 (ASHRLYKAGG) are cytoplasmic. A helical transmembrane segment spans residues 168 to 188 (GLYLISGFFVLVVTAMYVIWI). The Extracellular segment spans residues 189–218 (DVLDVISLYTEYQKLNKCADFELNKTYGLS). Asparagine 212 carries N-linked (GlcNAc...) asparagine glycosylation. Residues 219 to 239 (FMFAPVGVFFCFLSGLLFLVI) form a helical membrane-spanning segment. Topologically, residues 240–248 (GRTVHHQYN) are cytoplasmic.

The protein belongs to the TMEM182 family.

It is found in the cell membrane. In terms of biological role, may negatively regulate myogenesis and skeletal muscle regeneration. The chain is Transmembrane protein 182 (tmem182a) from Danio rerio (Zebrafish).